A 591-amino-acid polypeptide reads, in one-letter code: Aspartate--tRNA ligase (591 aa).

An L-aspartate-binding site is contributed by E176. The interval Q200 to K203 is aspartate. R222 serves as a coordination point for L-aspartate. ATP contacts are provided by residues R222 to E224 and Q231. H450 provides a ligand contact to L-aspartate. An ATP-binding site is contributed by E484. An L-aspartate-binding site is contributed by R491. An ATP-binding site is contributed by G536–R539.

It belongs to the class-II aminoacyl-tRNA synthetase family. Type 1 subfamily. Homodimer.

It is found in the cytoplasm. The catalysed reaction is tRNA(Asp) + L-aspartate + ATP = L-aspartyl-tRNA(Asp) + AMP + diphosphate. In terms of biological role, catalyzes the attachment of L-aspartate to tRNA(Asp) in a two-step reaction: L-aspartate is first activated by ATP to form Asp-AMP and then transferred to the acceptor end of tRNA(Asp). The chain is Aspartate--tRNA ligase from Listeria monocytogenes serotype 4a (strain HCC23).